The sequence spans 66 residues: Conotoxin Cal5.2 (66 aa).

An N-terminal signal peptide occupies residues 1–20 (MMYCLPVVCILLLLIPSSAT). Positions 21–51 (FVVESRLEKDQAQSFTGDAWKRVSPIHEMIQ) are excised as a propeptide. The residue at position 65 (V65) is a Valine amide.

It belongs to the conotoxin T superfamily. In terms of processing, contains 2 disulfide bonds that can be either 'C1-C3, C2-C4' or 'C1-C4, C2-C3', since these disulfide connectivities have been observed for conotoxins with cysteine framework V (for examples, see AC P0DQQ7 and AC P81755). As to expression, expressed by the venom duct.

The protein resides in the secreted. Functionally, probable neurotoxin with unknown target. Possibly targets ion channels. This is Conotoxin Cal5.2 from Californiconus californicus (California cone).